A 405-amino-acid polypeptide reads, in one-letter code: Threonine synthase (405 aa).

Residue K104 is modified to N6-(pyridoxal phosphate)lysine. Pyridoxal 5'-phosphate is bound by residues N130, 231–235 (GNAGN), and T369.

This sequence belongs to the threonine synthase family. In terms of assembly, homotrimer. It depends on pyridoxal 5'-phosphate as a cofactor.

The enzyme catalyses O-phospho-L-homoserine + H2O = L-threonine + phosphate. It participates in amino-acid biosynthesis; L-threonine biosynthesis; L-threonine from L-aspartate: step 5/5. In terms of biological role, catalyzes the gamma-elimination of phosphate from L-phosphohomoserine and the beta-addition of water to produce L-threonine. Does not catalyze the conversion of O-acetyl-L-homoserine into threonine. This chain is Threonine synthase (thrC), found in Methanosarcina acetivorans (strain ATCC 35395 / DSM 2834 / JCM 12185 / C2A).